A 670-amino-acid polypeptide reads, in one-letter code: DNA mismatch repair protein MutL (670 aa).

The tract at residues 363–451 (SFDRGRPLSR…RAAGGPASTH (89 aa)) is disordered. The span at 379–389 (ERWRERHRPDA) shows a compositional bias: basic and acidic residues.

The protein belongs to the DNA mismatch repair MutL/HexB family.

In terms of biological role, this protein is involved in the repair of mismatches in DNA. It is required for dam-dependent methyl-directed DNA mismatch repair. May act as a 'molecular matchmaker', a protein that promotes the formation of a stable complex between two or more DNA-binding proteins in an ATP-dependent manner without itself being part of a final effector complex. In Syntrophobacter fumaroxidans (strain DSM 10017 / MPOB), this protein is DNA mismatch repair protein MutL.